A 724-amino-acid polypeptide reads, in one-letter code: Polyribonucleotide nucleotidyltransferase (724 aa).

Mg(2+) is bound by residues Asp-488 and Asp-494. One can recognise a KH domain in the interval 555–614; that stretch reads PRMITVKINPEKIRDVIGKGGSTIQALTKETGCTIDIGEDGTITIASTSSEGMAEAKRRI. The region spanning 624–692 is the S1 motif domain; sequence GKIYNGTVLK…EKGRMRLSIK (69 aa). The tract at residues 697–724 is disordered; that stretch reads EEGDVPVAAPQAPGAGDAASQQQQQQQQ. Low complexity predominate over residues 701-724; the sequence is VPVAAPQAPGAGDAASQQQQQQQQ.

It belongs to the polyribonucleotide nucleotidyltransferase family. Mg(2+) serves as cofactor.

The protein resides in the cytoplasm. The enzyme catalyses RNA(n+1) + phosphate = RNA(n) + a ribonucleoside 5'-diphosphate. In terms of biological role, involved in mRNA degradation. Catalyzes the phosphorolysis of single-stranded polyribonucleotides processively in the 3'- to 5'-direction. In Ralstonia pickettii (strain 12J), this protein is Polyribonucleotide nucleotidyltransferase.